The following is a 449-amino-acid chain: GTPase Der (449 aa).

EngA-type G domains lie at 3-167 (AVIA…PTSE) and 178-351 (PRIA…IDSR). GTP-binding positions include 9–16 (GRPNVGKS), 56–60 (DTGGF), 119–122 (NKMD), 184–191 (GRPNVGKS), 231–235 (DTAGM), and 296–299 (NKWD). A KH-like domain is found at 352 to 436 (RHFSTAELNR…PLRLVFRQGE (85 aa)).

Belongs to the TRAFAC class TrmE-Era-EngA-EngB-Septin-like GTPase superfamily. EngA (Der) GTPase family. In terms of assembly, associates with the 50S ribosomal subunit.

Functionally, GTPase that plays an essential role in the late steps of ribosome biogenesis. In Acidithiobacillus ferrooxidans (strain ATCC 23270 / DSM 14882 / CIP 104768 / NCIMB 8455) (Ferrobacillus ferrooxidans (strain ATCC 23270)), this protein is GTPase Der.